The sequence spans 189 residues: Crossover junction endodeoxyribonuclease RuvC (189 aa).

Active-site residues include aspartate 8, glutamate 67, and aspartate 139. Residues aspartate 8, glutamate 67, and aspartate 139 each coordinate Mg(2+).

This sequence belongs to the RuvC family. Homodimer which binds Holliday junction (HJ) DNA. The HJ becomes 2-fold symmetrical on binding to RuvC with unstacked arms; it has a different conformation from HJ DNA in complex with RuvA. In the full resolvosome a probable DNA-RuvA(4)-RuvB(12)-RuvC(2) complex forms which resolves the HJ. Mg(2+) serves as cofactor.

It is found in the cytoplasm. It carries out the reaction Endonucleolytic cleavage at a junction such as a reciprocal single-stranded crossover between two homologous DNA duplexes (Holliday junction).. The RuvA-RuvB-RuvC complex processes Holliday junction (HJ) DNA during genetic recombination and DNA repair. Endonuclease that resolves HJ intermediates. Cleaves cruciform DNA by making single-stranded nicks across the HJ at symmetrical positions within the homologous arms, yielding a 5'-phosphate and a 3'-hydroxyl group; requires a central core of homology in the junction. The consensus cleavage sequence is 5'-(A/T)TT(C/G)-3'. Cleavage occurs on the 3'-side of the TT dinucleotide at the point of strand exchange. HJ branch migration catalyzed by RuvA-RuvB allows RuvC to scan DNA until it finds its consensus sequence, where it cleaves and resolves the cruciform DNA. The sequence is that of Crossover junction endodeoxyribonuclease RuvC from Histophilus somni (strain 129Pt) (Haemophilus somnus).